A 453-amino-acid polypeptide reads, in one-letter code: 3-phosphoshikimate 1-carboxyvinyltransferase (453 aa).

The tract at residues 1-25 (MSHDSEPQPVTAHPAGPLTGALKPP) is disordered. Positions 28, 29, and 33 each coordinate 3-phosphoshikimate. Lys-28 serves as a coordination point for phosphoenolpyruvate. 2 residues coordinate phosphoenolpyruvate: Gly-101 and Arg-129. Positions 175, 177, 330, and 357 each coordinate 3-phosphoshikimate. A phosphoenolpyruvate-binding site is contributed by Gln-177. Asp-330 functions as the Proton acceptor in the catalytic mechanism. Positions 361 and 405 each coordinate phosphoenolpyruvate.

It belongs to the EPSP synthase family. As to quaternary structure, monomer.

It is found in the cytoplasm. It carries out the reaction 3-phosphoshikimate + phosphoenolpyruvate = 5-O-(1-carboxyvinyl)-3-phosphoshikimate + phosphate. It functions in the pathway metabolic intermediate biosynthesis; chorismate biosynthesis; chorismate from D-erythrose 4-phosphate and phosphoenolpyruvate: step 6/7. Its function is as follows. Catalyzes the transfer of the enolpyruvyl moiety of phosphoenolpyruvate (PEP) to the 5-hydroxyl of shikimate-3-phosphate (S3P) to produce enolpyruvyl shikimate-3-phosphate and inorganic phosphate. This Methylorubrum populi (strain ATCC BAA-705 / NCIMB 13946 / BJ001) (Methylobacterium populi) protein is 3-phosphoshikimate 1-carboxyvinyltransferase.